The primary structure comprises 371 residues: GDSL esterase/lipase At3g27950 (371 aa).

Residues 1-23 (MAISKITLAIIVLLLGFTEKLSA) form the signal peptide. The Nucleophile role is filled by Ser-39. N-linked (GlcNAc...) asparagine glycosylation is found at Asn-82, Asn-143, Asn-178, Asn-194, and Asn-315. Catalysis depends on residues Asp-334 and His-337.

Belongs to the 'GDSL' lipolytic enzyme family.

It localises to the secreted. In Arabidopsis thaliana (Mouse-ear cress), this protein is GDSL esterase/lipase At3g27950.